A 432-amino-acid polypeptide reads, in one-letter code: Adenylosuccinate synthetase (432 aa).

GTP is bound by residues 12–18 (GDEGKGK) and 40–42 (GHT). The Proton acceptor role is filled by Asp13. Residues Asp13 and Gly40 each contribute to the Mg(2+) site. IMP contacts are provided by residues 13–16 (DEGK), 38–41 (NAGH), Thr129, Arg143, Gln224, Thr239, and Arg303. His41 acts as the Proton donor in catalysis. 299–305 (VTTGRRR) is a substrate binding site. GTP-binding positions include Arg305, 331 to 333 (KLD), and 413 to 415 (GVG).

Belongs to the adenylosuccinate synthetase family. As to quaternary structure, homodimer. The cofactor is Mg(2+).

Its subcellular location is the cytoplasm. It carries out the reaction IMP + L-aspartate + GTP = N(6)-(1,2-dicarboxyethyl)-AMP + GDP + phosphate + 2 H(+). It participates in purine metabolism; AMP biosynthesis via de novo pathway; AMP from IMP: step 1/2. Plays an important role in the de novo pathway of purine nucleotide biosynthesis. Catalyzes the first committed step in the biosynthesis of AMP from IMP. The sequence is that of Adenylosuccinate synthetase from Mycobacterium leprae (strain TN).